The chain runs to 436 residues: Probable transporter MCH1 (436 aa).

7 consecutive transmembrane segments (helical) span residues 27-47, 66-86, 93-113, 119-139, 155-175, 188-208, and 249-269; these read VVAFLISLLSCLVAGSILLFT, MISSLSALGMYFCLPVLGYLA, LLSLFSIWFFCPSYFVNSYLV, SVIGFCVCFCFIGLATSSLYF, LAISLPITCYGLSALLGAQIL, LEVVFSFFAWLYLVVGIASFV, and FVSFVKDPSAWILLVSLILNI. N278 carries N-linked (GlcNAc...) asparagine glycosylation. 5 helical membrane-spanning segments follow: residues 295-312, 325-345, 347-367, 373-393, and 410-430; these read VSIMAASSTGARLLLGVL, LLVVVIVVGVAGQMSETSAIL, GVSYGGMFTIYPTIVASIWGI, TWGSFMVAPALGSVIFSMFYG, and TAGAMIVSCIFVLLAWKIWYA.

This sequence belongs to the major facilitator superfamily.

It is found in the vacuole membrane. In terms of biological role, probable transporter. In Candida albicans (strain SC5314 / ATCC MYA-2876) (Yeast), this protein is Probable transporter MCH1 (MCH1).